The primary structure comprises 265 residues: MSFPYFISPEQAMRERSELARKGIARGRSVVALAYAGGVLFVAENPSRSLQKISELYDRVGFAAAGKFNEFDNLRRGGIQFADTRGYAYDRRDVTGRQLANVYAQTLGTIFTEQAKPYEVELCVAEVAHYGETKPPELYRITYDGSINDEPHFMVMGGTTESIANALKESYAENASLTDALGIAVAALRAGSADAAGSDQPTLGVASLEVAVLDANRPRRAFRRIIGSGLEALLREKDSKGSKGAQNPKGARDSKNSKSYGESTD.

Positions 236–265 (EKDSKGSKGAQNPKGARDSKNSKSYGESTD) are disordered.

This sequence belongs to the peptidase T1A family. In terms of assembly, the 20S proteasome core is composed of 14 alpha and 14 beta subunits that assemble into four stacked heptameric rings, resulting in a barrel-shaped structure. The two inner rings, each composed of seven catalytic beta subunits, are sandwiched by two outer rings, each composed of seven alpha subunits. The catalytic chamber with the active sites is on the inside of the barrel. Has a gated structure, the ends of the cylinder being occluded by the N-termini of the alpha-subunits. Is capped by the proteasome-associated ATPase, ARC.

The protein localises to the cytoplasm. It participates in protein degradation; proteasomal Pup-dependent pathway. The formation of the proteasomal ATPase ARC-20S proteasome complex, likely via the docking of the C-termini of ARC into the intersubunit pockets in the alpha-rings, may trigger opening of the gate for substrate entry. Interconversion between the open-gate and close-gate conformations leads to a dynamic regulation of the 20S proteasome proteolysis activity. In terms of biological role, component of the proteasome core, a large protease complex with broad specificity involved in protein degradation. In Mycobacterium leprae (strain Br4923), this protein is Proteasome subunit alpha.